Here is a 508-residue protein sequence, read N- to C-terminus: MSADGLAAFLAEANEFRTIPIVRKFVADVIEPLGVFANLREEAVFLLESKDDESPWARYSFIGVAPFLTLESETGETFSVKDENGNEQITAPTLKEAFQWVERTLAVKPLAETVPFTGGAVGFLGYDFISAIEKVPRHKNRDVPMKTAYFVFCESLFAFDQKKRELLVIHYIRLSGNETEEEKIEAYRAAERRMADLAAKAARPQAEQPLLPAESESGRTASFAKAVSNYDKKQFLRDVEAVKRYIAAGDVFQAVLSQRFCVPVQAGGFAIYRLLRYINPSPYMFYFQLDGVEIVGSSPEKLIQVHRRRVEIDPIAGTRRRGRSPEEDERLADELYHDPKERAEHYMLVDLARNDIGRVAKYGTVEVPVLLQIGKFSHVMHLISKVVGELDDNVHPIDALLAAFPAGTVSGAPKVRAMQILQELEPTARGLYAGAIAYIGFDGNIDSCIAIRTAVVKDGYAYVQAGAGIVADSVPELEWKETRNKASALMNAIEQAERLFAKGERAVC.

L-tryptophan-binding positions include serine 49 and 282–284; that span reads PYM. Chorismate is bound at residue 317–318; sequence GT. Residue glutamate 344 participates in Mg(2+) binding. Chorismate contacts are provided by residues tyrosine 432, arginine 452, 466–468, and glycine 468; that span reads GAG. Glutamate 481 contributes to the Mg(2+) binding site.

This sequence belongs to the anthranilate synthase component I family. As to quaternary structure, heterotetramer consisting of two non-identical subunits: a beta subunit (TrpG) and a large alpha subunit (TrpE). The cofactor is Mg(2+).

It carries out the reaction chorismate + L-glutamine = anthranilate + pyruvate + L-glutamate + H(+). Its pathway is amino-acid biosynthesis; L-tryptophan biosynthesis; L-tryptophan from chorismate: step 1/5. Feedback inhibited by tryptophan. Its function is as follows. Part of a heterotetrameric complex that catalyzes the two-step biosynthesis of anthranilate, an intermediate in the biosynthesis of L-tryptophan. In the first step, the glutamine-binding beta subunit (TrpG) of anthranilate synthase (AS) provides the glutamine amidotransferase activity which generates ammonia as a substrate that, along with chorismate, is used in the second step, catalyzed by the large alpha subunit of AS (TrpE) to produce anthranilate. In the absence of TrpG, TrpE can synthesize anthranilate directly from chorismate and high concentrations of ammonia. The polypeptide is Anthranilate synthase component 1 (trpE) (Bacillus caldotenax).